A 347-amino-acid chain; its full sequence is Transcription elongation factor A protein 3 (347 aa).

Residues 5–82 enclose the TFIIS N-terminal domain; the sequence is EELLRIAKKL…KNWKRLLDSP (78 aa). Residues 83–100 show a composition bias toward basic and acidic residues; the sequence is RTTKGEREEREKAKKEKG. The tract at residues 83 to 168 is disordered; sequence RTTKGEREER…TTPSSPSTPT (86 aa). Serine 113 carries the phosphoserine modification. A compositionally biased stretch (basic and acidic residues) spans 119 to 131; that stretch reads GGGEPKTRRDSVD. Composition is skewed to low complexity over residues 132–142 and 157–168; these read SRSSTTSSPKR and TPTTPSSPSTPT. Serine 139 carries the post-translational modification Phosphoserine. The TFIIS central domain maps to 186–302; that stretch reads VRDKCVEMLS…EHQMAKTGGT (117 aa). The TFIIS-type zinc-finger motif lies at 305-345; it reads DLLRCSKCKKKNCTYNQVQTRSADEPMTTFVLCNECGNRWK. Zn(2+)-binding residues include cysteine 309, cysteine 312, cysteine 337, and cysteine 340.

Belongs to the TFS-II family. In terms of tissue distribution, liver, kidney and heart.

The protein localises to the nucleus. Functionally, necessary for efficient RNA polymerase II transcription elongation past template-encoded arresting sites. The arresting sites in DNA have the property of trapping a certain fraction of elongating RNA polymerases that pass through, resulting in locked ternary complexes. Cleavage of the nascent transcript by S-II allows the resumption of elongation from the new 3'-terminus. The chain is Transcription elongation factor A protein 3 (Tcea3) from Mus musculus (Mouse).